The following is a 352-amino-acid chain: Protein RecA (352 aa).

Position 67 to 74 (67 to 74) interacts with ATP; that stretch reads GPESSGKT. Residues 332–352 are disordered; it reads VKPADAESKEDSPKLKAVDGF. Residues 335-352 show a composition bias toward basic and acidic residues; that stretch reads ADAESKEDSPKLKAVDGF.

Belongs to the RecA family.

It localises to the cytoplasm. Functionally, can catalyze the hydrolysis of ATP in the presence of single-stranded DNA, the ATP-dependent uptake of single-stranded DNA by duplex DNA, and the ATP-dependent hybridization of homologous single-stranded DNAs. It interacts with LexA causing its activation and leading to its autocatalytic cleavage. In Pseudarthrobacter chlorophenolicus (strain ATCC 700700 / DSM 12829 / CIP 107037 / JCM 12360 / KCTC 9906 / NCIMB 13794 / A6) (Arthrobacter chlorophenolicus), this protein is Protein RecA.